The chain runs to 520 residues: Arginine biosynthesis bifunctional protein ArgJ, chloroplastic (520 aa).

Substrate-binding residues include Thr264, Lys290, Thr301, Glu388, Asn515, and Thr520. Catalysis depends on Thr301, which acts as the Nucleophile.

The protein belongs to the ArgJ family. As to quaternary structure, heterodimer of an alpha and a beta chain.

Its subcellular location is the plastid. It is found in the chloroplast. It carries out the reaction N(2)-acetyl-L-ornithine + L-glutamate = N-acetyl-L-glutamate + L-ornithine. The catalysed reaction is L-glutamate + acetyl-CoA = N-acetyl-L-glutamate + CoA + H(+). It participates in amino-acid biosynthesis; L-arginine biosynthesis; L-ornithine and N-acetyl-L-glutamate from L-glutamate and N(2)-acetyl-L-ornithine (cyclic): step 1/1. The protein operates within amino-acid biosynthesis; L-arginine biosynthesis; N(2)-acetyl-L-ornithine from L-glutamate: step 1/4. In terms of biological role, catalyzes two activities which are involved in the cyclic version of arginine biosynthesis: the synthesis of acetylglutamate from glutamate and acetyl-CoA, and of ornithine by transacetylation between acetylornithine and glutamate. This is Arginine biosynthesis bifunctional protein ArgJ, chloroplastic from Physcomitrium patens (Spreading-leaved earth moss).